The sequence spans 256 residues: Thiazole synthase (256 aa).

Catalysis depends on lysine 95, which acts as the Schiff-base intermediate with DXP. Residues glycine 156, alanine 182–glycine 183, and asparagine 204–threonine 205 contribute to the 1-deoxy-D-xylulose 5-phosphate site.

This sequence belongs to the ThiG family. As to quaternary structure, homotetramer. Forms heterodimers with either ThiH or ThiS.

The protein localises to the cytoplasm. It carries out the reaction [ThiS sulfur-carrier protein]-C-terminal-Gly-aminoethanethioate + 2-iminoacetate + 1-deoxy-D-xylulose 5-phosphate = [ThiS sulfur-carrier protein]-C-terminal Gly-Gly + 2-[(2R,5Z)-2-carboxy-4-methylthiazol-5(2H)-ylidene]ethyl phosphate + 2 H2O + H(+). The protein operates within cofactor biosynthesis; thiamine diphosphate biosynthesis. Functionally, catalyzes the rearrangement of 1-deoxy-D-xylulose 5-phosphate (DXP) to produce the thiazole phosphate moiety of thiamine. Sulfur is provided by the thiocarboxylate moiety of the carrier protein ThiS. In vitro, sulfur can be provided by H(2)S. This Enterobacter sp. (strain 638) protein is Thiazole synthase.